Here is a 250-residue protein sequence, read N- to C-terminus: 3-deoxy-manno-octulosonate cytidylyltransferase (250 aa).

Belongs to the KdsB family.

The protein resides in the cytoplasm. The catalysed reaction is 3-deoxy-alpha-D-manno-oct-2-ulosonate + CTP = CMP-3-deoxy-beta-D-manno-octulosonate + diphosphate. Its pathway is nucleotide-sugar biosynthesis; CMP-3-deoxy-D-manno-octulosonate biosynthesis; CMP-3-deoxy-D-manno-octulosonate from 3-deoxy-D-manno-octulosonate and CTP: step 1/1. It participates in bacterial outer membrane biogenesis; lipopolysaccharide biosynthesis. Its function is as follows. Activates KDO (a required 8-carbon sugar) for incorporation into bacterial lipopolysaccharide in Gram-negative bacteria. The protein is 3-deoxy-manno-octulosonate cytidylyltransferase of Yersinia enterocolitica serotype O:8 / biotype 1B (strain NCTC 13174 / 8081).